Reading from the N-terminus, the 393-residue chain is Formate-dependent phosphoribosylglycinamide formyltransferase (393 aa).

N(1)-(5-phospho-beta-D-ribosyl)glycinamide-binding positions include 17 to 18 (EL) and Glu77. Residues Arg109, Lys150, 155–160 (SSGKGQ), 190–193 (EEFL), and Glu198 each bind ATP. The ATP-grasp domain occupies 114 to 304 (DLAAGELGLR…EFELHLRAVL (191 aa)). The Mg(2+) site is built by Glu263 and Glu275. Residues Asp282, Lys354, and 361-362 (RR) each bind N(1)-(5-phospho-beta-D-ribosyl)glycinamide.

Belongs to the PurK/PurT family. As to quaternary structure, homodimer.

It carries out the reaction N(1)-(5-phospho-beta-D-ribosyl)glycinamide + formate + ATP = N(2)-formyl-N(1)-(5-phospho-beta-D-ribosyl)glycinamide + ADP + phosphate + H(+). Its pathway is purine metabolism; IMP biosynthesis via de novo pathway; N(2)-formyl-N(1)-(5-phospho-D-ribosyl)glycinamide from N(1)-(5-phospho-D-ribosyl)glycinamide (formate route): step 1/1. Functionally, involved in the de novo purine biosynthesis. Catalyzes the transfer of formate to 5-phospho-ribosyl-glycinamide (GAR), producing 5-phospho-ribosyl-N-formylglycinamide (FGAR). Formate is provided by PurU via hydrolysis of 10-formyl-tetrahydrofolate. The chain is Formate-dependent phosphoribosylglycinamide formyltransferase from Synechococcus sp. (strain RCC307).